Consider the following 203-residue polypeptide: DNA-directed RNA polymerase subunit gamma (203 aa).

Cysteine 34, cysteine 36, cysteine 49, and cysteine 52 together coordinate Zn(2+).

It belongs to the RNA polymerase beta' chain family. RpoC1 subfamily. As to quaternary structure, in cyanobacteria the RNAP catalytic core is composed of 2 alpha, 1 beta, 1 beta', 1 gamma and 1 omega subunit. When a sigma factor is associated with the core the holoenzyme is formed, which can initiate transcription. It depends on Zn(2+) as a cofactor.

It carries out the reaction RNA(n) + a ribonucleoside 5'-triphosphate = RNA(n+1) + diphosphate. DNA-dependent RNA polymerase catalyzes the transcription of DNA into RNA using the four ribonucleoside triphosphates as substrates. The polypeptide is DNA-directed RNA polymerase subunit gamma (rpoC1) (Prochloron sp).